The chain runs to 684 residues: MTVPATDSWPAPIRVPAGTTAAAAVRDAGLPGRGAPDAVVVVRDASGTLRDLSWVPDTDAEVVPVAANTDEGRSVIRHSAAHVLAQAVQELFPQAKLGIGPPITDGFYYDFDVPEPFTPEDLDKLEKRMRQIVKEGQLFSRRVYESKEQARAELAGEPYKLELVDDKSGDPDIMEVGGDELTAYDNLNPRTRERVWGDLCRGPHIPTTRHIPAFKLTRSSAAYWRGDQNNASLQRIYGTAWESQEALDDHLRLIEEAQRRDHRKLGSELDLFSFPDEIGSGLAVFHPRGGVVRRELEEYSRRKHIEAGYEFVNTPHITKAQLFHTSGHLDWYADGMFPPMHLDAEYDDDGTVRKPGQDYYLKPMNCPMHTLIYRSRGRSYRELPLRLFEFGTVYRYEKSGVVHGLTRARGFTMDDSHIFCTREQLHGELASLLRFVLELLGDYGLTDFYLELSTKDPDKFVGSDEMWEQATTSLADVAAESGLELVPDPGGAAFYGPKISVQARDALGRSWQMSTIQVDFNFPERFELEYTASDGTRQRPVMIHRALFGSIERFFGILTEHYAGAFPAWLAPVQAVGIPVADEHVPYLESVAAQLKSHGVRVEVDASDDRMAKKIVHHTAQKVPFMLLAGDRDVAAGAVSFRFGDRTQINGVPRDSAVDAIVKWIADRENSVPSAELVKVSSGE.

Residues methionine 1–alanine 66 enclose the TGS domain. Residues aspartate 261–proline 567 are catalytic. Residues cysteine 366, histidine 417, and histidine 544 each contribute to the Zn(2+) site.

The protein belongs to the class-II aminoacyl-tRNA synthetase family. In terms of assembly, homodimer. The cofactor is Zn(2+).

It is found in the cytoplasm. It carries out the reaction tRNA(Thr) + L-threonine + ATP = L-threonyl-tRNA(Thr) + AMP + diphosphate + H(+). In terms of biological role, catalyzes the attachment of threonine to tRNA(Thr) in a two-step reaction: L-threonine is first activated by ATP to form Thr-AMP and then transferred to the acceptor end of tRNA(Thr). Also edits incorrectly charged L-seryl-tRNA(Thr). The polypeptide is Threonine--tRNA ligase (Mycobacterium avium (strain 104)).